Here is a 37-residue protein sequence, read N- to C-terminus: Large ribosomal subunit protein bL36 (37 aa).

Belongs to the bacterial ribosomal protein bL36 family.

This Sulfurihydrogenibium sp. (strain YO3AOP1) protein is Large ribosomal subunit protein bL36.